An 83-amino-acid chain; its full sequence is Sec-independent protein translocase protein TatA (83 aa).

The helical transmembrane segment at 2-22 threads the bilayer; sequence GLGGISIWQLLIVLVIVLLLF. Composition is skewed to basic and acidic residues over residues 50–65 and 74–83; these read AAKQ…KVAA and AEQKEKTEAK. Residues 50–83 form a disordered region; the sequence is AAKQEAEEAEQKKVAAEEAAAAKTAEQKEKTEAK.

It belongs to the TatA/E family. In terms of assembly, the Tat system comprises two distinct complexes: a TatABC complex, containing multiple copies of TatA, TatB and TatC subunits, and a separate TatA complex, containing only TatA subunits. Substrates initially bind to the TatABC complex, which probably triggers association of the separate TatA complex to form the active translocon.

It is found in the cell inner membrane. Its function is as follows. Part of the twin-arginine translocation (Tat) system that transports large folded proteins containing a characteristic twin-arginine motif in their signal peptide across membranes. TatA could form the protein-conducting channel of the Tat system. In Saccharophagus degradans (strain 2-40 / ATCC 43961 / DSM 17024), this protein is Sec-independent protein translocase protein TatA.